The primary structure comprises 225 residues: Potassium-transporting ATPase KdpC subunit (225 aa).

Residues 18-38 (ALLVLTVVTGIVYPLVVTGVA) traverse the membrane as a helical segment. Residues 134 to 161 (NSVPGHPVRPEDVPADAVTSSGSGLDPD) form a disordered region.

The protein belongs to the KdpC family. The system is composed of three essential subunits: KdpA, KdpB and KdpC.

It localises to the cell membrane. Part of the high-affinity ATP-driven potassium transport (or Kdp) system, which catalyzes the hydrolysis of ATP coupled with the electrogenic transport of potassium into the cytoplasm. This subunit acts as a catalytic chaperone that increases the ATP-binding affinity of the ATP-hydrolyzing subunit KdpB by the formation of a transient KdpB/KdpC/ATP ternary complex. The sequence is that of Potassium-transporting ATPase KdpC subunit from Streptomyces coelicolor (strain ATCC BAA-471 / A3(2) / M145).